Reading from the N-terminus, the 116-residue chain is Iron-sulfur cluster insertion protein ErpA (116 aa).

Cys-44, Cys-108, and Cys-110 together coordinate iron-sulfur cluster.

The protein belongs to the HesB/IscA family. Homodimer. Iron-sulfur cluster serves as cofactor.

Its function is as follows. Required for insertion of 4Fe-4S clusters for at least IspG. In Francisella tularensis subsp. mediasiatica (strain FSC147), this protein is Iron-sulfur cluster insertion protein ErpA.